The sequence spans 648 residues: Centrosomal protein of 63 kDa-B (648 aa).

Coiled-coil stretches lie at residues Asp19–Asn188 and Glu222–Ser555. Ser559 is modified (phosphoserine; by atm and atr). Positions Phe611–Phe644 form a coiled coil.

This sequence belongs to the CEP63 family. Post-translationally, phosphorylation at Ser-559 by atm and atr promotes its delocalization from the centrosome and impairs its ability to promote centrosome dependent spindle assembly.

It is found in the cytoplasm. The protein resides in the cytoskeleton. The protein localises to the microtubule organizing center. It localises to the centrosome. Its subcellular location is the centriole. In terms of biological role, required for normal spindle assembly. Plays a key role in mother-centriole-dependent centriole duplication. Plays a role in DNA damage response. Following DNA damage, such as double-strand breaks (DSBs), is removed from centrosomes; this leads to the inactivation of spindle assembly and delay in mitotic progression. This chain is Centrosomal protein of 63 kDa-B (cep63-b), found in Xenopus laevis (African clawed frog).